A 303-amino-acid chain; its full sequence is Aquaporin NIP1-2 (303 aa).

The interval 1 to 39 is disordered; the sequence is MAGREDGAAAGAMEEGQDSKEVKCESSEDGSSSSSSSRC. Residues 17 to 26 are compositionally biased toward basic and acidic residues; it reads QDSKEVKCES. The next 2 membrane-spanning stretches (helical) occupy residues 66 to 86 and 91 to 111; these read ILAEILGTYFMIFAGCGAVVV and GGAVTFPGICAVWGLVVMVLV. Positions 123-125 match the NPA 1 motif; that stretch reads NPA. A run of 3 helical transmembrane segments spans residues 145–165, 188–208, and 212–232; these read VVAQVLGSTMASLTLRVVFGG, AAALEFVISFFLMFVVSGVAT, and AIGELAGLAVGATVAVNVLFA. Residues 241 to 243 carry the NPA 2 motif; the sequence is NPA. Residues 255-275 form a helical membrane-spanning segment; that stretch reads YGGVWVYVAAPVSGTVCGAWA.

It belongs to the MIP/aquaporin (TC 1.A.8) family. NIP (TC 1.A.8.12) subfamily. In terms of tissue distribution, expressed in roots and leaves, and at lower levels in anthers.

The protein localises to the membrane. Functionally, aquaporins facilitate the transport of water and small neutral solutes across cell membranes. This Oryza sativa subsp. japonica (Rice) protein is Aquaporin NIP1-2 (NIP1-2).